Here is a 128-residue protein sequence, read N- to C-terminus: UPF0102 protein RPB_0420 (128 aa).

It belongs to the UPF0102 family.

In Rhodopseudomonas palustris (strain HaA2), this protein is UPF0102 protein RPB_0420.